The sequence spans 72 residues: Prokaryotic ubiquitin-like protein Pup (72 aa).

Residues 1–11 are compositionally biased toward gly residues; it reads MAQRDTGGGQQ. Positions 1-41 are disordered; it reads MAQRDTGGGQQRTGRRDDETAEAEVEESGASDLKERHEKLS. Acidic residues predominate over residues 19–29; sequence ETAEAEVEESG. The stretch at 22 to 61 forms a coiled coil; sequence EAEVEESGASDLKERHEKLSEDVDSLLDEIDDVLEENAEE. The segment at 28–66 is ARC ATPase binding; sequence SGASDLKERHEKLSEDVDSLLDEIDDVLEENAEEFVKGY. Over residues 32-41 the composition is skewed to basic and acidic residues; it reads DLKERHEKLS. A Deamidated glutamine modification is found at Gln72. Gln72 participates in a covalent cross-link: Isoglutamyl lysine isopeptide (Gln-Lys) (interchain with K-? in acceptor proteins).

It belongs to the prokaryotic ubiquitin-like protein family. Strongly interacts with the proteasome-associated ATPase ARC through a hydrophobic interface; the interacting region of Pup lies in its C-terminal half. There is one Pup binding site per ARC hexamer ring. Post-translationally, is modified by deamidation of its C-terminal glutamine to glutamate by the deamidase Dop, a prerequisite to the subsequent pupylation process.

It participates in protein degradation; proteasomal Pup-dependent pathway. Protein modifier that is covalently attached to lysine residues of substrate proteins, thereby targeting them for proteasomal degradation. The tagging system is termed pupylation. The chain is Prokaryotic ubiquitin-like protein Pup from Parafrankia sp. (strain EAN1pec).